Here is a 520-residue protein sequence, read N- to C-terminus: Leucine carboxyl methyltransferase 1 (520 aa).

2 disordered regions span residues 1-116 and 142-174; these read MQRD…DDAV and TQEF…SIRR. The segment covering 79-89 has biased composition (low complexity); it reads PSLRLSLGLPR. Polar residues-rich tracts occupy residues 95-110 and 142-151; these read HSGQ…STAR and TQEFSSTLPS. Residues R185, G210, D237, 305 to 306, and E343 contribute to the S-adenosyl-L-methionine site; that span reads DV.

It belongs to the methyltransferase superfamily. LCMT family.

The catalysed reaction is [phosphatase 2A protein]-C-terminal L-leucine + S-adenosyl-L-methionine = [phosphatase 2A protein]-C-terminal L-leucine methyl ester + S-adenosyl-L-homocysteine. Methylates the carboxyl group of the C-terminal leucine residue of protein phosphatase 2A catalytic subunits to form alpha-leucine ester residues. In Mycosarcoma maydis (Corn smut fungus), this protein is Leucine carboxyl methyltransferase 1 (PPM1).